Here is a 124-residue protein sequence, read N- to C-terminus: CLAVATA3/ESR (CLE)-related protein 45 (124 aa).

Positions 1–20 (MLGSSTRSMFFLLVCIGLLA) are cleaved as a signal peptide. Residues Asn25 and Asn96 are each glycosylated (N-linked (GlcNAc...) asparagine). Positions 71-109 (LNKNRRVLEEVNKDKIKAEETQERKNKTEDSFKSSKRRV) form a coiled coil. The segment covering 87-103 (KAEETQERKNKTEDSFK) has biased composition (basic and acidic residues). The tract at residues 87 to 124 (KAEETQERKNKTEDSFKSSKRRVRRGSDPIHNKAQPFS) is disordered.

Belongs to the CLV3/ESR signal peptide family. Binds to SKM1 present in the pollen grain, particularly under relatively high temperature (at 30 degrees Celsius). Interacts with BAM3, especially in roots. In terms of tissue distribution, expressed at low levels in flowers, especially in pistils. Present in vascular tissues. In roots, confined to protophloem and sieve element precursor cells.

It is found in the secreted. The protein resides in the extracellular space. Functionally, extracellular signal peptide that regulates cell fate. Represses root apical meristem maintenance. Represses protophloem differentiation in a BAM3-dependent manner. BRX, BAM3, and CLE45 act together to regulate the transition of protophloem cells from proliferation to differentiation, thus impinging on postembryonic growth capacity of the root meristem; this signaling pathway requires CRN and CLV2 and involves MAKR5 for its transduction/amplification. Triggers the accumulation of MAKR5 in developing sieve elements in a BAM3-dependent manner. Prevents, in a dose-dependent manner, auxin response in the root meristem thus leading in the repression of protophloem differentiation and periclinal sieve element precursor cell division. Promotes pollen tube growth prolongation in a SKM1 and SKM2-dependent manner, especially under relatively high temperature (at 30 degrees Celsius), thus conferring tolerance against high temperature probably through the maintenance of mitochondrial activity. Alleviates mitochondrial decay pollen tube in vitro culture. This chain is CLAVATA3/ESR (CLE)-related protein 45, found in Arabidopsis thaliana (Mouse-ear cress).